Reading from the N-terminus, the 295-residue chain is 33 kDa chaperonin (295 aa).

2 disulfides stabilise this stretch: Cys237–Cys239 and Cys270–Cys273.

Belongs to the HSP33 family. Under oxidizing conditions two disulfide bonds are formed involving the reactive cysteines. Under reducing conditions zinc is bound to the reactive cysteines and the protein is inactive.

The protein localises to the cytoplasm. Functionally, redox regulated molecular chaperone. Protects both thermally unfolding and oxidatively damaged proteins from irreversible aggregation. Plays an important role in the bacterial defense system toward oxidative stress. The sequence is that of 33 kDa chaperonin from Shouchella clausii (strain KSM-K16) (Alkalihalobacillus clausii).